A 1492-amino-acid chain; its full sequence is Neogenin (1492 aa).

Positions 1-36 (MAAEREAGRLLCTSSSRRCCPPPPLLLLLPLLLLLG) are cleaved as a signal peptide. Over 37–1136 (RPASGAAATK…PTSPLDSNML (1100 aa)) the chain is Extracellular. Ig-like C2-type domains are found at residues 63-158 (PFYF…AKLT), 163-249 (PRFT…AELK), 254-347 (PEEI…AELT), and 352-437 (PGFL…AQLI). The N-linked (GlcNAc...) asparagine glycan is linked to Asn84. 3 disulfide bridges follow: Cys85/Cys140, Cys184/Cys232, and Cys281/Cys331. The N-linked (GlcNAc...) asparagine glycan is linked to Asn221. An N-linked (GlcNAc...) asparagine glycan is attached at Asn337. An intrachain disulfide couples Cys373 to Cys421. Fibronectin type-III domains follow at residues 472–566 (APRD…TQPE), 572–662 (PAPN…TLSD), 667–762 (APQN…TFES), 772–862 (VPSS…RPHT), 887–986 (PPVG…LVPT), and 988–1085 (PPKD…TPKA). Residues Asn501 and Asn520 are each glycosylated (N-linked (GlcNAc...) asparagine). 2 N-linked (GlcNAc...) asparagine glycosylation sites follow: Asn670 and Asn746. The N-linked (GlcNAc...) asparagine glycan is linked to Asn940. The tract at residues 1072-1128 (GPMSEAVQFRTPKADSSDKMPNDQALGSAGKGSRLPDLGSDYKPPMSGSNSPHGSPT) is disordered. Residues 1083 to 1092 (PKADSSDKMP) show a composition bias toward basic and acidic residues. Positions 1118–1128 (SGSNSPHGSPT) are enriched in polar residues. The helical transmembrane segment at 1137 to 1157 (LVIIVSVGVITIVVVVVIAVF) threads the bilayer. Topologically, residues 1158–1492 (CTRRTTSHQK…MKDLNAITTA (335 aa)) are cytoplasmic. Disordered stretches follow at residues 1205 to 1237 (PIDKSPDPNPVMTDTPIPRNSQDITPVDNSMDS), 1266 to 1300 (PKMMMPFDSQPPQPVISAHPIHSLDNPHHHFHSSS), and 1321 to 1396 (SMSL…FAVP). Residues Ser1209 and Ser1225 each carry the phosphoserine modification. A compositionally biased stretch (polar residues) spans 1222–1237 (PRNSQDITPVDNSMDS). Thr1229 carries the post-translational modification Phosphothreonine. 2 stretches are compositionally biased toward polar residues: residues 1321-1353 (SMSLSDRANSTESVRNTPSTDTMPASSSQTCCT) and 1361-1380 (ATSSSYLASSQEEDSGQSLP). Ser1432 is modified (phosphoserine). Position 1435 is a phosphothreonine (Thr1435). Ser1463, Ser1465, and Ser1466 each carry phosphoserine.

The protein belongs to the immunoglobulin superfamily. DCC family. In terms of assembly, interacts with BMP2, BMP4, BMP6, and BMP7. Interacts with RGMA and RGMB. Interacts with MYO10. Widely expressed.

The protein resides in the cell membrane. Functionally, multi-functional cell surface receptor regulating cell adhesion in many diverse developmental processes, including neural tube and mammary gland formation, myogenesis and angiogenesis. Receptor for members of the BMP, netrin, and repulsive guidance molecule (RGM) families. Netrin-Neogenin interactions result in a chemoattractive axon guidance response and cell-cell adhesion, the interaction between NEO1/Neogenin and RGMa and RGMb induces a chemorepulsive response. This is Neogenin from Mus musculus (Mouse).